The chain runs to 397 residues: Aurora kinase A (397 aa).

The tract at residues 1-118 (MDRCKENCVS…SIQKTEDSKK (118 aa)) is disordered. Polar residues-rich tracts occupy residues 29 to 55 (QIPS…SQRV) and 84 to 102 (RLSN…SGNN). 2 positions are modified to phosphoserine: Ser-40 and Ser-50. The span at 103–118 (SEKEQTSIQKTEDSKK) shows a compositional bias: basic and acidic residues. Positions 126-376 (FDIGRPLGKG…LAEVLEHPWI (251 aa)) constitute a Protein kinase domain. ATP is bound by residues Lys-136, Lys-155, and 203–206 (LEYA). The Proton acceptor role is filled by Asp-249. A Glycyl lysine isopeptide (Lys-Gly) (interchain with G-Cter in SUMO2) cross-link involves residue Lys-251. Residues 253 to 254 (EN) and Asp-267 contribute to the ATP site. The activation segment stretch occupies residues 273-286 (HAPSSRRTTLCGTL). Residues Thr-280 and Thr-281 each carry the phosphothreonine modification. Ser-335 bears the Phosphoserine; by PKA and PAK mark. Residues 378-387 (ANSSKPPTGH) show a composition bias toward polar residues. A disordered region spans residues 378–397 (ANSSKPPTGHNSKEATSKSS). Basic and acidic residues predominate over residues 388 to 397 (NSKEATSKSS).

The protein belongs to the protein kinase superfamily. Ser/Thr protein kinase family. Aurora subfamily. As to quaternary structure, part of a complex composed of NEDD9, AURKA and CTTN; within the complex NEDD9 acts as a scaffold protein and is required for complex formation. Identified in a complex with AUNIP and NIN. Interacts with CPEB1, JTB, TACC1, TPX2, PPP2CA, as well as with the protein phosphatase type 1 (PP1) isoforms PPP1CA, PPP1CB and PPP1CC. Also interacts with its substrates ARHGEF2, BORA, KIF2A, PARD3, and p53/TP53. Interaction with BORA promotes phosphorylation of PLK1. Interacts with FBXL7 and CIMAP3. Interacts with GADD45A, competing with its oligomerization. Interacts (via C-terminus) with AUNIP (via C-terminus). Interacts with SIRT2. Interacts with FRY; this interaction facilitates AURKA-mediated PLK1 phosphorylation. Interacts with MYCN; interaction is phospho-independent and triggers AURKA activation; AURKA competes with FBXW7 for binding to unphosphorylated MYCN but not for binding to phosphorylated MYCN. Interacts with HNRNPU. Interacts with AAAS. Interacts with KLHL18 and CUL3. Interacts with FOXP1. Interacts with HDAC6; AURKA-mediated phosphorylation of HDAC6 promotes deacetylation of alpha-tubulin. In terms of processing, activated by phosphorylation at Thr-281; this brings about a change in the conformation of the activation segment. Phosphorylation at Thr-281 varies during the cell cycle and is highest during M phase. Autophosphorylated at Thr-281 upon TPX2 binding. Thr-281 can be phosphorylated by several kinases, including PAK and PKA. Protein phosphatase type 1 (PP1) binds AURKA and inhibits its activity by dephosphorylating Thr-281 during mitosis. Phosphorylation at Ser-335 decreases the kinase activity. PPP2CA controls degradation by dephosphorylating Ser-52 at the end of mitosis. Phosphorylated in embryonic brain neurons. Post-translationally, ubiquitinated by CHFR, leading to its degradation by the proteasome. Ubiquitinated by the anaphase-promoting complex (APC), leading to its degradation by the proteasome. Ubiquitinated by the E3 ubiquitin-protein ligase complex SCF(FBXL7) during mitosis, leading to its degradation by the proteasome. Ubiquitinated by the CUL3-KLHL18 ligase leading to its activation at the centrosome which is required for initiating mitotic entry. Ubiquitination mediated by CUL3-KLHL18 ligase does not lead to its degradation by the proteasome. As to expression, detected in neurons in brain cortex and hippocampus (at protein level). Expressed in mammary gland and tumor.

It localises to the cytoplasm. The protein resides in the cytoskeleton. Its subcellular location is the microtubule organizing center. It is found in the centrosome. The protein localises to the spindle pole. It localises to the centriole. The protein resides in the cell projection. Its subcellular location is the neuron projection. It is found in the cilium. The protein localises to the cilium basal body. It localises to the basolateral cell membrane. The enzyme catalyses L-seryl-[protein] + ATP = O-phospho-L-seryl-[protein] + ADP + H(+). It carries out the reaction L-threonyl-[protein] + ATP = O-phospho-L-threonyl-[protein] + ADP + H(+). With respect to regulation, activation of CDK1, appears to be an upstream event of AURKA activation. Phosphatase inhibitor-2 (PPP1R2) and TPX2 act also as activators. Inactivated by the G2 checkpoint. Inhibited by GADD45A and p53/TP53, and through dephosphorylation by protein phosphatase type 1 (PP1). MLN8054 is also a potent and selective inhibitor. Activated during the early phase of cilia disassembly in the presence of FBXL7 and CIMAP3. Inhibited by the small molecule inhibitor VX-680. Mitotic serine/threonine kinase that contributes to the regulation of cell cycle progression. Associates with the centrosome and the spindle microtubules during mitosis and plays a critical role in various mitotic events including the establishment of mitotic spindle, centrosome duplication, centrosome separation as well as maturation, chromosomal alignment, spindle assembly checkpoint, and cytokinesis. Required for normal spindle positioning during mitosis and for the localization of NUMA1 and DCTN1 to the cell cortex during metaphase. Required for initial activation of CDK1 at centrosomes. Phosphorylates numerous target proteins, including ARHGEF2, BORA, BRCA1, CDC25B, DLGP5, HDAC6, KIF2A, LATS2, NDEL1, PARD3, PPP1R2, PLK1, RASSF1, TACC3, p53/TP53 and TPX2. Phosphorylates MCRS1 which is required for MCRS1-mediated kinetochore fiber assembly and mitotic progression. Regulates KIF2A tubulin depolymerase activity. Required for normal axon formation. Plays a role in microtubule remodeling during neurite extension. Important for microtubule formation and/or stabilization. Also acts as a key regulatory component of the p53/TP53 pathway, and particularly the checkpoint-response pathways critical for oncogenic transformation of cells, by phosphorylating and stabilizating p53/TP53. Phosphorylates its own inhibitors, the protein phosphatase type 1 (PP1) isoforms, to inhibit their activity. Inhibits cilia outgrowth. Required for cilia disassembly via phosphorylation of HDAC6 and subsequent deacetylation of alpha-tubulin. Regulates protein levels of the anti-apoptosis protein BIRC5 by suppressing the expression of the SCF(FBXL7) E3 ubiquitin-protein ligase substrate adapter FBXL7 through the phosphorylation of the transcription factor FOXP1. The polypeptide is Aurora kinase A (Rattus norvegicus (Rat)).